The sequence spans 593 residues: Tyrosine-protein phosphatase non-receptor type 11 (593 aa).

Residue Thr2 is modified to N-acetylthreonine. SH2 domains follow at residues 6 to 102 (WFHP…KYPL) and 112 to 216 (WFHG…KQPL). Residues Tyr62 and Tyr66 each carry the phosphotyrosine modification. A Tyrosine-protein phosphatase domain is found at 247 to 517 (FWEEFETLQQ…EAQYRFIYMA (271 aa)). Residues Asp425, 459 to 465 (CSAGIGR), and Gln506 each bind substrate. The Phosphocysteine intermediate role is filled by Cys459. Residues Tyr542 and Tyr580 each carry the phosphotyrosine; by PDGFR modification.

The protein belongs to the protein-tyrosine phosphatase family. Non-receptor class 2 subfamily. In terms of assembly, interacts with phosphorylated SIT1, LIME1, BCAR3 and MZPL1. Interacts with FCRL4, FCRL6, ANKHD1, SHB, INPP5D/SHIP1 and CD84. Interacts with MILR1 (tyrosine-phosphorylated). Interacts with FLT1 (tyrosine-phosphorylated), FLT3 (tyrosine-phosphorylated), FLT4 (tyrosine-phosphorylated), KIT and GRB2. Interacts with PTPNS1. Interacts with KIR2DL1; the interaction is enhanced by ARRB2. Interacts (via SH2 domain) with TEK/TIE2 (tyrosine phosphorylated). Interacts with GAB2. Interacts with TERT; the interaction retains TERT in the nucleus. Interacts with PECAM1 and FER. Interacts with EPHA2 (activated); participates in PTK2/FAK1 dephosphorylation in EPHA2 downstream signaling. Interacts with PDGFRA (tyrosine phosphorylated). Interacts with PDGFRB (tyrosine phosphorylated); this interaction increases the PTPN11 phosphatase activity. Interacts with ROS1; this mediates PTPN11 phosphorylation. Interacts with CEACAM1 (via cytoplasmic domain); this interaction depends on the monomer/dimer equilibrium and is phosphorylation-dependent. Interacts with MPIG6B (via ITIM motif). Interacts with SIGLEC10. Interacts with CLEC12B (via ITIM motif); this interaction triggers dephosphorylation and activation of PTPN11. Interacts (via SH2 domains) with NEDD9/CAS-L; the interaction is enhanced when NEDD9/CAS-L is tyrosine phosphorylated. Phosphorylated on Tyr-542 and Tyr-580 upon receptor protein tyrosine kinase activation; which creates a binding site for GRB2 and other SH2-containing proteins. Phosphorylated upon activation of the receptor-type kinase FLT3. Phosphorylated upon activation of the receptor-type kinase PDGFRA. Phosphorylated by activated PDGFRB. As to expression, expressed in brain, muscle and lung.

Its subcellular location is the cytoplasm. The enzyme catalyses O-phospho-L-tyrosyl-[protein] + H2O = L-tyrosyl-[protein] + phosphate. Inhibited by orthovanadate, molybdate and spermidine. Its function is as follows. Acts downstream of various receptor and cytoplasmic protein tyrosine kinases to participate in the signal transduction from the cell surface to the nucleus. Positively regulates MAPK signal transduction pathway. Dephosphorylates GAB1, ARHGAP35 and EGFR. Dephosphorylates ROCK2 at 'Tyr-722' resulting in stimulation of its RhoA binding activity. Dephosphorylates CDC73. Dephosphorylates SOX9 on tyrosine residues, leading to inactivate SOX9 and promote ossification. Dephosphorylates tyrosine-phosphorylated NEDD9/CAS-L. The chain is Tyrosine-protein phosphatase non-receptor type 11 (Ptpn11) from Rattus norvegicus (Rat).